The primary structure comprises 272 residues: 1,4-dihydroxy-6-naphtoate synthase (272 aa).

Substrate is bound by residues 55–57 and 107–108; these read KLS and TA. Residue histidine 145 is the Proton acceptor of the active site.

The protein belongs to the MqnA/MqnD family. MqnD subfamily.

The enzyme catalyses cyclic dehypoxanthinylfutalosinate = 1,4-dihydroxy-6-naphthoate + dihydroxyacetone. Its pathway is quinol/quinone metabolism; menaquinone biosynthesis. Catalyzes the conversion of cyclic dehypoxanthine futalosine (cyclic DHFL) into 1,4-dihydroxy-6-naphthoate, a step in the biosynthesis of menaquinone (MK, vitamin K2). This Thermus thermophilus (strain ATCC 27634 / DSM 579 / HB8) protein is 1,4-dihydroxy-6-naphtoate synthase.